The chain runs to 295 residues: ATP synthase gamma chain (295 aa).

Belongs to the ATPase gamma chain family. As to quaternary structure, F-type ATPases have 2 components, CF(1) - the catalytic core - and CF(0) - the membrane proton channel. CF(1) has five subunits: alpha(3), beta(3), gamma(1), delta(1), epsilon(1). CF(0) has three main subunits: a, b and c.

The protein resides in the cell inner membrane. In terms of biological role, produces ATP from ADP in the presence of a proton gradient across the membrane. The gamma chain is believed to be important in regulating ATPase activity and the flow of protons through the CF(0) complex. The polypeptide is ATP synthase gamma chain (Campylobacter concisus (strain 13826)).